The sequence spans 348 residues: Peroxidase 40 (348 aa).

Positions 1 to 21 (MKNLFNLFLMFFFAMPILSLS) are cleaved as a signal peptide. N26 carries N-linked (GlcNAc...) asparagine glycosylation. 4 cysteine pairs are disulfide-bonded: C59–C139, C92–C97, C145–C344, and C224–C256. The active-site Proton acceptor is H90. Residues D91, V94, G96, D98, and S100 each contribute to the Ca(2+) site. Residues 170-189 (GRKDSRTASKQAATNGLPSP) are disordered. The span at 177–189 (ASKQAATNGLPSP) shows a compositional bias: polar residues. A substrate-binding site is contributed by P187. N190 carries an N-linked (GlcNAc...) asparagine glycan. H217 provides a ligand contact to heme b. Ca(2+) is bound at residue T218. Ca(2+) contacts are provided by D269, T272, and D277.

The protein belongs to the peroxidase family. Classical plant (class III) peroxidase subfamily. The cofactor is heme b. Ca(2+) is required as a cofactor.

It is found in the secreted. It carries out the reaction 2 a phenolic donor + H2O2 = 2 a phenolic radical donor + 2 H2O. Its function is as follows. Removal of H(2)O(2), oxidation of toxic reductants, biosynthesis and degradation of lignin, suberization, auxin catabolism, response to environmental stresses such as wounding, pathogen attack and oxidative stress. These functions might be dependent on each isozyme/isoform in each plant tissue. The chain is Peroxidase 40 (PER40) from Arabidopsis thaliana (Mouse-ear cress).